A 24-amino-acid chain; its full sequence is Arginine attenuator peptide (24 aa).

Belongs to the arginine attenuator peptide family.

In terms of biological role, arginine attenuator peptide (AAP) that has a regulatory role in the production of arginine-specific carbamoyl phosphate synthetase. Encoded by an upstream open reading frame (uORF) within the 5'-leader region of arginine-specific carbamoyl phosphate synthetase small chain (arg-2) mRNA, it attenuates the translation of the downstream arg-2 ORF. In the presence of high concentrations of arginine, ribosomes translating the uORF encoding AAP stall at the termination codon, resulting in reduced translation from the downstream arg-2 initiation codon. The sequence is that of Arginine attenuator peptide from Neurospora crassa (strain ATCC 24698 / 74-OR23-1A / CBS 708.71 / DSM 1257 / FGSC 987).